The chain runs to 544 residues: Chaperonin GroEL 2 (544 aa).

ATP-binding positions include 29–32, 86–90, glycine 413, 479–481, and aspartate 495; these read TLGP, DGTTT, and NAA.

The protein belongs to the chaperonin (HSP60) family. In terms of assembly, forms a cylinder of 14 subunits composed of two heptameric rings stacked back-to-back. Interacts with the co-chaperonin GroES.

It is found in the cytoplasm. The enzyme catalyses ATP + H2O + a folded polypeptide = ADP + phosphate + an unfolded polypeptide.. Together with its co-chaperonin GroES, plays an essential role in assisting protein folding. The GroEL-GroES system forms a nano-cage that allows encapsulation of the non-native substrate proteins and provides a physical environment optimized to promote and accelerate protein folding. This is Chaperonin GroEL 2 from Trichodesmium erythraeum (strain IMS101).